Here is a 484-residue protein sequence, read N- to C-terminus: NADH-ubiquinone oxidoreductase chain 4 (484 aa).

Helical transmembrane passes span 1–21 (MLTL…PMQG), 33–53 (LALG…GEFD), 77–97 (VDGI…ICIL), 109–129 (YFLM…VVLD), 130–150 (ILLF…IVGI), 162–182 (FLLF…FLVI), 206–226 (LLWL…PFHV), 236–256 (PLAG…YGYM), 270–290 (FSPL…LATL), 295–315 (FKAL…LGLF), 326–346 (LLLS…VGGV), 365–385 (YMPL…AVPL), 405–425 (VFAV…IWLY), and 448–468 (FMLL…PNII).

This sequence belongs to the complex I subunit 4 family.

It localises to the mitochondrion inner membrane. The catalysed reaction is a ubiquinone + NADH + 5 H(+)(in) = a ubiquinol + NAD(+) + 4 H(+)(out). Its function is as follows. Core subunit of the mitochondrial membrane respiratory chain NADH dehydrogenase (Complex I) that is believed to belong to the minimal assembly required for catalysis. Complex I functions in the transfer of electrons from NADH to the respiratory chain. The immediate electron acceptor for the enzyme is believed to be ubiquinone. The polypeptide is NADH-ubiquinone oxidoreductase chain 4 (ND4) (Mycosarcoma maydis (Corn smut fungus)).